Consider the following 146-residue polypeptide: Anti-sigma F factor (146 aa).

Belongs to the anti-sigma-factor family.

The catalysed reaction is L-seryl-[protein] + ATP = O-phospho-L-seryl-[protein] + ADP + H(+). It carries out the reaction L-threonyl-[protein] + ATP = O-phospho-L-threonyl-[protein] + ADP + H(+). Its function is as follows. Binds to sigma F and blocks its ability to form an RNA polymerase holoenzyme (E-sigma F). Phosphorylates SpoIIAA on a serine residue. This phosphorylation may enable SpoIIAA to act as an anti-anti-sigma factor that counteracts SpoIIAB and thus releases sigma F from inhibition. This Geobacillus stearothermophilus (Bacillus stearothermophilus) protein is Anti-sigma F factor.